A 194-amino-acid chain; its full sequence is MYKNGFFKNYLSLLLIFLVIACTSKDSSNEYVEEQEAENSSKPDDSKIDEHTIGHVFHAMGVVHSKKDRKSLGENIKVFYFSEEDGHFQTIPSKENAKLIVYFYDNVYAGEAPISISGKEAFIFVGITSDFKKIINSNLHGAKSDLIGTFKDLNIKNSKLEITVDENNSDAKTFLESVNYIIDGVEKISPMLTN.

The first 21 residues, 1-21 (MYKNGFFKNYLSLLLIFLVIA), serve as a signal peptide directing secretion. Cysteine 22 carries N-palmitoyl cysteine lipidation. Cysteine 22 is lipidated: S-diacylglycerol cysteine.

It localises to the cell outer membrane. This Borreliella burgdorferi (strain N40) (Borrelia burgdorferi) protein is Outer surface 22 kDa lipoprotein (p22).